Reading from the N-terminus, the 177-residue chain is Putative rubredoxin (177 aa).

The Rubredoxin-like domain maps to 1-38 (MKICRICGYQIPEGEFNLLEDGWVCPRCGVGKEELQDS). Residues C4, C7, C25, and C28 each coordinate Fe cation.

The protein belongs to the rubredoxin family. The cofactor is Fe(3+).

The protein is Putative rubredoxin (rdxA) of Methanothermobacter thermautotrophicus (strain ATCC 29096 / DSM 1053 / JCM 10044 / NBRC 100330 / Delta H) (Methanobacterium thermoautotrophicum).